The following is a 344-amino-acid chain: MIKVGIVGGTGYTGVELLRLLAQHPQARVEVITSRSEAGVKVADMYPNLRGHYDDLQFSVPDAQRLGACDVVFFATPHGVAHALAGELLDAGTRVIDLSADFRLADAEEWARWYGQPHGAPALLDEAVYGLPEVNREKIRQARLIAVPGCYPTATQLGLIPLLEAGLADASRLIADCKSGVSGAGRGAKVGSLFCEAGESMMAYAVKGHRHLPEISQGLRRASGGDVGLTFVPHLTPMIRGIHATLYAHVADRSVDLQALFEKRYADEPFVDVMPAGSHPETRSVRGANVCRIAVHRPQGGDLVVVLSVIDNLVKGASGQALQNMNILFGLDERLGLSHAALLP.

Cys150 is an active-site residue.

Belongs to the NAGSA dehydrogenase family. Type 1 subfamily.

The protein resides in the cytoplasm. The catalysed reaction is N-acetyl-L-glutamate 5-semialdehyde + phosphate + NADP(+) = N-acetyl-L-glutamyl 5-phosphate + NADPH + H(+). It participates in amino-acid biosynthesis; L-arginine biosynthesis; N(2)-acetyl-L-ornithine from L-glutamate: step 3/4. Functionally, catalyzes the NADPH-dependent reduction of N-acetyl-5-glutamyl phosphate to yield N-acetyl-L-glutamate 5-semialdehyde. The sequence is that of N-acetyl-gamma-glutamyl-phosphate reductase from Pseudomonas aeruginosa (strain ATCC 15692 / DSM 22644 / CIP 104116 / JCM 14847 / LMG 12228 / 1C / PRS 101 / PAO1).